Consider the following 166-residue polypeptide: Telethonin (166 aa).

S39 bears the Phosphoserine mark. Residues 145–166 are disordered; sequence VSKPGTLRRSLSRSMSQEAQRG. Residues 156–166 are compositionally biased toward polar residues; sequence SRSMSQEAQRG.

Interacts with MYOZ1, MYOZ2 and MYOZ3. Interacts with CSRP3. Interacts directly with the N-terminal Ig-like domains of 2 titin (TTN) molecules. Interacts with ANKRD2; the interaction is direct.

It is found in the cytoplasm. Its subcellular location is the myofibril. It localises to the sarcomere. Muscle assembly regulating factor. Mediates the antiparallel assembly of titin (TTN) molecules at the sarcomeric Z-disk. This Bos taurus (Bovine) protein is Telethonin (TCAP).